The primary structure comprises 207 residues: Small ribosomal subunit protein uS4 (207 aa).

Residues 31–53 are disordered; the sequence is KAKFDSKPGQHGRTSGARTSDYG. An S4 RNA-binding domain is found at 97 to 157; that stretch reads CRLDNVVYRM…EKSKKQARIV (61 aa).

It belongs to the universal ribosomal protein uS4 family. Part of the 30S ribosomal subunit. Contacts protein S5. The interaction surface between S4 and S5 is involved in control of translational fidelity.

Functionally, one of the primary rRNA binding proteins, it binds directly to 16S rRNA where it nucleates assembly of the body of the 30S subunit. Its function is as follows. With S5 and S12 plays an important role in translational accuracy. The protein is Small ribosomal subunit protein uS4 of Acidovorax ebreus (strain TPSY) (Diaphorobacter sp. (strain TPSY)).